The following is a 1425-amino-acid chain: Rho GTPase-activating protein 31 (1425 aa).

Residues 21-216 (CDLTEYLESS…FILNHADQIF (196 aa)) enclose the Rho-GAP domain. Residues 258-277 (LATNHPARKERRENSLPEIV) are disordered. Ser-272 is modified (phosphoserine). Thr-283 bears the Phosphothreonine mark. Phosphoserine occurs at positions 343, 346, 384, and 464. Over residues 511-522 (EEFSFQGSESGG) the composition is skewed to low complexity. Disordered stretches follow at residues 511 to 621 (EEFS…GAGT), 652 to 700 (SEEE…TRDA), and 756 to 951 (IEIG…GNSH). Basic and acidic residues-rich tracts occupy residues 543-556 (AATE…EVPG) and 587-600 (KEAE…KVME). Residues 603 to 615 (QGASQPKPSTPQE) show a composition bias toward polar residues. A Phosphothreonine modification is found at Thr-666. Pro residues predominate over residues 671 to 681 (ESSPAPFPFPE). A phosphoserine mark is found at Ser-685, Ser-690, and Ser-765. Pro residues predominate over residues 767 to 777 (PLTPAPPPPTP). Residue Thr-769 is modified to Phosphothreonine. Thr-776 carries the post-translational modification Phosphothreonine; by GSK3. Residues 789-804 (EGPDREDAARDSRTDV) show a composition bias toward basic and acidic residues. Residues 936 to 951 (LRQSHSLDSKTTGNSH) are compositionally biased toward polar residues. A phosphoserine mark is found at Ser-961, Ser-1092, Ser-1093, and Ser-1163. Positions 1031 to 1095 (KEQEPQLELS…KGKHRPSSLN (65 aa)) are disordered. Polar residues-rich tracts occupy residues 1196 to 1206 (QIPQPLPSQST), 1250 to 1260 (QETGASASRRQ), and 1299 to 1308 (TEPSGDNLLS). 2 disordered regions span residues 1196-1260 (QIPQ…SRRQ) and 1291-1327 (QCRK…SRPG).

As to quaternary structure, interacts with ITSN1, which inhibits GAP activity. Interacts with PARVA. Interacts with GTP-loaded RHOU. In terms of processing, phosphorylated on Thr-776 by GSK3; which reduces GAP activity. In terms of tissue distribution, expressed at highest levels in heart and lung.

Its subcellular location is the cell projection. It localises to the lamellipodium. It is found in the cell junction. The protein localises to the focal adhesion. In terms of biological role, functions as a GTPase-activating protein (GAP) for RAC1 and CDC42. Required for cell spreading, polarized lamellipodia formation and cell migration. The polypeptide is Rho GTPase-activating protein 31 (Arhgap31) (Mus musculus (Mouse)).